The chain runs to 113 residues: Crustacean hyperglycemic hormones B (113 aa).

Positions 1–26 are cleaved as a signal peptide; the sequence is MVAFRMMSMALLVVVASSWWASPVEA. Intrachain disulfides connect Cys-46/Cys-82, Cys-62/Cys-78, and Cys-65/Cys-91. A Valine amide modification is found at Val-111.

The protein belongs to the arthropod CHH/MIH/GIH/VIH hormone family. Expressed at a constant level in the eyestalks of juveniles and mature females. A low level expression is seen in the central nervous system.

Its subcellular location is the secreted. Its function is as follows. Hormone found in the sinus gland of isopods and decapods which controls the blood sugar level. Has a secretagogue action over the amylase released from the midgut gland. May act as a stress hormone and may be involved in the control of molting and reproduction. The protein is Crustacean hyperglycemic hormones B of Metapenaeus ensis (Greasyback shrimp).